The sequence spans 2496 residues: Non-reducing polyketide synthase adrD (2496 aa).

Residues 15–254 form an N-terminal acylcarrier protein transacylase domain (SAT) region; that stretch reads LVFGPQIAEI…HHASHITAVQ (240 aa). A Ketosynthase family 3 (KS3) domain is found at 387–808; it reads ATPIAITGMG…GSNAALVVKQ (422 aa). Residues Cys552, His687, and His726 each act as for beta-ketoacyl synthase activity in the active site. The tract at residues 914–1223 is malonyl-CoA:ACP transacylase (MAT) domain; sequence LCFGGQNGNE…QSLDLGGPQG (310 aa). Catalysis depends on Ser1001, which acts as the For acyl/malonyl transferase activity. Residues 1295–1423 are N-terminal hotdog fold; that stretch reads KEFVQLLTKQ…GEISLHPFGQ (129 aa). Positions 1295 to 1602 constitute a PKS/mFAS DH domain; that stretch reads KEFVQLLTKQ…FTSVSIAGLA (308 aa). Positions 1296 to 1601 are product template (PT) domain; that stretch reads EFVQLLTKQP…EFTSVSIAGL (306 aa). The Proton acceptor; for dehydratase activity role is filled by His1326. Residues 1451 to 1602 are C-terminal hotdog fold; it reads ESSGLKGFAV…FTSVSIAGLA (152 aa). Residue Asp1509 is the Proton donor; for dehydratase activity of the active site. The segment covering 1615–1629 has biased composition (basic and acidic residues); the sequence is EKASPDLSLRNDSKV. A disordered region spans residues 1615–1645; it reads EKASPDLSLRNDSKVDVNPTPQNTAPVVQPT. Over residues 1633-1645 the composition is skewed to polar residues; sequence PTPQNTAPVVQPT. One can recognise a Carrier domain in the interval 1652 to 1726; it reads PGYFVVVQEM…ALVQTIFPDA (75 aa). O-(pantetheine 4'-phosphoryl)serine is present on Ser1686. Residues 1888–2121 form a methyltransferase (CMeT) domain region; it reads QHRSEHHLLK…GFQWVDWTHN (234 aa). The tract at residues 2151–2496 is thioesterase (TE) domain; that stretch reads RVMNEETVPY…YEFLRDHVRY (346 aa). Active-site for thioesterase activity residues include Ser2274 and Asp2433.

It carries out the reaction 3 malonyl-CoA + acetyl-CoA + 2 S-adenosyl-L-methionine = 3,5-dimethylorsellinate + 2 S-adenosyl-L-homocysteine + 3 CO2 + 4 CoA. It participates in secondary metabolite biosynthesis; terpenoid biosynthesis. Functionally, non-reducing polyketide synthase; part of the gene cluster that mediates the biosynthesis of andrastins, meroterpenoid compounds that exhibit inhibitory activity against ras farnesyltransferase, suggesting that they could be promising leads for antitumor agents. The first step of the pathway is the synthesis of 3,5-dimethylorsellinic acid (DMOA) by the polyketide synthase adrD via condensation of one acetyl-CoA starter unit with 3 malonyl-CoA units and 2 methylations. DMAO is then converted to farnesyl-DMAO by the prenyltransferase adrG. The methyltransferase adrK catalyzes the methylation of the carboxyl group of farnesyl-DMAO to farnesyl-DMAO methyl ester which is further converted to epoxyfarnesyl-DMAO methyl ester by the FAD-dependent monooxygenase adrH. The terpene cyclase adrI then catalyzes the carbon skeletal rearrangement to generate the andrastin E, the first compound in the pathway having the andrastin scaffold, with the tetracyclic ring system. The post-cyclization tailoring enzymes adrF, adrE, adrJ, and adrA, are involved in the conversion of andrastin E into andrastin A. The short chain dehydrogenase adrF is responsible for the oxidation of the C-3 a hydroxyl group of andrastin E to yield the corresponding ketone, andrastin D. The ketoreductase adrE stereoselectively reduces the carbonyl moiety to reverse the stereochemistry of the C-3 position to yield andrastin F. The acetyltransferase adrJ is the acetyltransferase that attaches the acetyl group to the C-3 hydroxyl group of andrastin F to yield andrastin C. Finally, the cytochrome P450 monooxygenase adrA catalyzes two sequential oxidation reactions of the C-23 methyl group, to generate the corresponding alcohol andrastin B, and aldehyde andrastin A. The protein is Non-reducing polyketide synthase adrD of Penicillium rubens (strain ATCC 28089 / DSM 1075 / NRRL 1951 / Wisconsin 54-1255) (Penicillium chrysogenum).